The sequence spans 620 residues: Dihydroxy-acid dehydratase (620 aa).

Residue D81 coordinates Mg(2+). C122 is a [2Fe-2S] cluster binding site. Mg(2+) is bound by residues D123 and K124. N6-carboxylysine is present on K124. C195 contributes to the [2Fe-2S] cluster binding site. E491 contacts Mg(2+). The active-site Proton acceptor is the S517.

The protein belongs to the IlvD/Edd family. As to quaternary structure, homodimer. The cofactor is [2Fe-2S] cluster. Mg(2+) is required as a cofactor.

It catalyses the reaction (2R)-2,3-dihydroxy-3-methylbutanoate = 3-methyl-2-oxobutanoate + H2O. The enzyme catalyses (2R,3R)-2,3-dihydroxy-3-methylpentanoate = (S)-3-methyl-2-oxopentanoate + H2O. It functions in the pathway amino-acid biosynthesis; L-isoleucine biosynthesis; L-isoleucine from 2-oxobutanoate: step 3/4. Its pathway is amino-acid biosynthesis; L-valine biosynthesis; L-valine from pyruvate: step 3/4. Functionally, functions in the biosynthesis of branched-chain amino acids. Catalyzes the dehydration of (2R,3R)-2,3-dihydroxy-3-methylpentanoate (2,3-dihydroxy-3-methylvalerate) into 2-oxo-3-methylpentanoate (2-oxo-3-methylvalerate) and of (2R)-2,3-dihydroxy-3-methylbutanoate (2,3-dihydroxyisovalerate) into 2-oxo-3-methylbutanoate (2-oxoisovalerate), the penultimate precursor to L-isoleucine and L-valine, respectively. The chain is Dihydroxy-acid dehydratase from Colwellia psychrerythraea (strain 34H / ATCC BAA-681) (Vibrio psychroerythus).